An 847-amino-acid chain; its full sequence is KN motif and ankyrin repeat domain-containing protein 2 (847 aa).

Positions 1–32 (MAQVLHVPAPFPGTPGQASSAAFPNKEPDPPY) are disordered. The interaction with AIFM1 stretch occupies residues 1–72 (MAQVLHVPAP…PVQRRPRLGS (72 aa)). Phosphoserine occurs at positions 19, 83, 86, 89, and 92. Position 105 is an omega-N-methylarginine (R105). The interval 161–182 (LAGVGLLPPTPRSSGLSTPVAP) is disordered. A Phosphothreonine modification is found at T170. Coiled coils occupy residues 187 to 207 (LAHV…LEEQ) and 284 to 311 (EAAL…AQTQ). T331 carries the post-translational modification Phosphothreonine. Position 358 is a phosphoserine (S358). 2 disordered regions span residues 414-473 (GAAR…GGAS) and 502-581 (NGGY…PEEE). Residues 420 to 433 (DPPPSPAEPSPSSP) are compositionally biased toward pro residues. Composition is skewed to low complexity over residues 434-446 (YPAA…APAA) and 506-516 (ESSSEDSSTAE). S536 carries the phosphoserine modification. An ANK 0; degenerate repeat occupies 610 to 647 (RELKVAYTTVLQEWLRLACRSDAHPELVRRHLVTFRAM). 5 ANK repeats span residues 662–692 (NGNT…QVDK), 696–729 (AGYS…NVNA), 734–763 (AGQT…DVNM), 767–797 (DGST…DISL), and 801–831 (DGST…KCSF). Residues 665 to 831 (TALHYSVSHA…YSRMNIKCSF (167 aa)) are interaction with NCOA1.

As to quaternary structure, interacts (non-phosphorylated form) with NCOA1; NCOA2 AND NCOA3. Interacts with AIFM1. Interacts with ARHGDIA; the interaction is direct and may regulate the interaction of ARHGDIA with RHOA, RAC1 and CDC42. Interacts (via ANK repeats 1-5) with KIF21A. Post-translationally, phosphorylated by casein kinase II upon estrogen stimulation. Phosphorylation induces the release by KANK2 of NCOA1 and its translocation to the nucleus where NCOA1 can activate gene transcription. Expressed by podocytes in kidney glomeruli (at protein level).

The protein resides in the cytoplasm. Its subcellular location is the mitochondrion. In terms of biological role, involved in transcription regulation by sequestering in the cytoplasm nuclear receptor coactivators such as NCOA1, NCOA2 and NCOA3. Involved in regulation of caspase-independent apoptosis by sequestering the proapoptotic factor AIFM1 in mitochondria. Pro-apoptotic stimuli can induce its proteasomal degradation allowing the translocation of AIFM1 to the nucleus to induce apoptosis. Involved in the negative control of vitamin D receptor signaling pathway. Involved in actin stress fibers formation through its interaction with ARHGDIA and the regulation of the Rho signaling pathway. May thereby play a role in cell adhesion and migration, regulating for instance podocytes migration during development of the kidney. Through the Rho signaling pathway may also regulate cell proliferation. This Rattus norvegicus (Rat) protein is KN motif and ankyrin repeat domain-containing protein 2.